The chain runs to 196 residues: Holliday junction branch migration complex subunit RuvA (196 aa).

A domain I region spans residues 1-63; that stretch reads MYDYIKGILT…EDAHLLYGFA (63 aa). Residues 64-142 form a domain II region; the sequence is TENEKSVFLS…MSEEAGPVQQ (79 aa). The flexible linker stretch occupies residues 142–146; the sequence is QVAPS. The segment at 147-196 is domain III; that stretch reads SENIALEEAMEAMEALGYRPAELKKIKKFFEGTNDTAENYIKSALKMLMK.

This sequence belongs to the RuvA family. In terms of assembly, homotetramer. Forms an RuvA(8)-RuvB(12)-Holliday junction (HJ) complex. HJ DNA is sandwiched between 2 RuvA tetramers; dsDNA enters through RuvA and exits via RuvB. An RuvB hexamer assembles on each DNA strand where it exits the tetramer. Each RuvB hexamer is contacted by two RuvA subunits (via domain III) on 2 adjacent RuvB subunits; this complex drives branch migration. In the full resolvosome a probable DNA-RuvA(4)-RuvB(12)-RuvC(2) complex forms which resolves the HJ.

The protein resides in the cytoplasm. The RuvA-RuvB-RuvC complex processes Holliday junction (HJ) DNA during genetic recombination and DNA repair, while the RuvA-RuvB complex plays an important role in the rescue of blocked DNA replication forks via replication fork reversal (RFR). RuvA specifically binds to HJ cruciform DNA, conferring on it an open structure. The RuvB hexamer acts as an ATP-dependent pump, pulling dsDNA into and through the RuvAB complex. HJ branch migration allows RuvC to scan DNA until it finds its consensus sequence, where it cleaves and resolves the cruciform DNA. In Streptococcus suis (strain 98HAH33), this protein is Holliday junction branch migration complex subunit RuvA.